A 55-amino-acid chain; its full sequence is ATP synthase F(0) complex subunit 8 (55 aa).

Residues 4 to 24 form a helical membrane-spanning segment; the sequence is LLPTPWFTIFIYAWMVLLAVI.

The protein belongs to the ATPase protein 8 family. Component of the ATP synthase complex composed at least of ATP5F1A/subunit alpha, ATP5F1B/subunit beta, ATP5MC1/subunit c (homooctomer), MT-ATP6/subunit a, MT-ATP8/subunit 8, ATP5ME/subunit e, ATP5MF/subunit f, ATP5MG/subunit g, ATP5MK/subunit k, ATP5MJ/subunit j, ATP5F1C/subunit gamma, ATP5F1D/subunit delta, ATP5F1E/subunit epsilon, ATP5PF/subunit F6, ATP5PB/subunit b, ATP5PD/subunit d, ATP5PO/subunit OSCP. ATP synthase complex consists of a soluble F(1) head domain (subunits alpha(3) and beta(3)) - the catalytic core - and a membrane F(0) domain - the membrane proton channel (subunits c, a, 8, e, f, g, k and j). These two domains are linked by a central stalk (subunits gamma, delta, and epsilon) rotating inside the F1 region and a stationary peripheral stalk (subunits F6, b, d, and OSCP).

Its subcellular location is the mitochondrion membrane. Subunit 8, of the mitochondrial membrane ATP synthase complex (F(1)F(0) ATP synthase or Complex V) that produces ATP from ADP in the presence of a proton gradient across the membrane which is generated by electron transport complexes of the respiratory chain. ATP synthase complex consist of a soluble F(1) head domain - the catalytic core - and a membrane F(1) domain - the membrane proton channel. These two domains are linked by a central stalk rotating inside the F(1) region and a stationary peripheral stalk. During catalysis, ATP synthesis in the catalytic domain of F(1) is coupled via a rotary mechanism of the central stalk subunits to proton translocation. In vivo, can only synthesize ATP although its ATP hydrolase activity can be activated artificially in vitro. Part of the complex F(0) domain. The polypeptide is ATP synthase F(0) complex subunit 8 (Dicentrarchus labrax (European seabass)).